Here is a 129-residue protein sequence, read N- to C-terminus: DNA-directed RNA polymerase subunit omega (129 aa).

The disordered stretch occupies residues 76–100 (EVDEPEPEAVPMIASGDSSGGEDSD).

This sequence belongs to the RNA polymerase subunit omega family. The RNAP catalytic core consists of 2 alpha, 1 beta, 1 beta' and 1 omega subunit. When a sigma factor is associated with the core the holoenzyme is formed, which can initiate transcription.

The enzyme catalyses RNA(n) + a ribonucleoside 5'-triphosphate = RNA(n+1) + diphosphate. Promotes RNA polymerase assembly. Latches the N- and C-terminal regions of the beta' subunit thereby facilitating its interaction with the beta and alpha subunits. This chain is DNA-directed RNA polymerase subunit omega, found in Xanthobacter autotrophicus (strain ATCC BAA-1158 / Py2).